The sequence spans 278 residues: Phosphoenolpyruvate carboxylase kinase 2 (278 aa).

The Protein kinase domain maps to 11 to 269 (YQLCDEIGRG…AEDALRHSWM (259 aa)). ATP-binding positions include 17-25 (IGRGRFGTI) and Lys40. The active-site Proton acceptor is the Asp137.

It belongs to the protein kinase superfamily. Ser/Thr protein kinase family. Expressed in flowers and roots, and at lower levels in cauline leaves. Barely detectable in rosette leaves and stems.

The enzyme catalyses L-seryl-[protein] + ATP = O-phospho-L-seryl-[protein] + ADP + H(+). The catalysed reaction is L-threonyl-[protein] + ATP = O-phospho-L-threonyl-[protein] + ADP + H(+). Calcium-independent kinase involved in light-dependent phosphoenolpyruvate carboxylase phosphorylation. The sequence is that of Phosphoenolpyruvate carboxylase kinase 2 (PPCK2) from Arabidopsis thaliana (Mouse-ear cress).